The primary structure comprises 133 residues: Protein Ac75 (133 aa).

Interacts with protein Ac76.

Its subcellular location is the virion. It localises to the host cytoplasm. The protein localises to the host nucleus. Functionally, plays a role in nuclear egress of nucleocapsids and intranuclear microvesicle formation. This is Protein Ac75 (Ac75) from Lepidoptera (butterflies and moths).